A 318-amino-acid chain; its full sequence is DNA repair nuclease/redox regulator APEX1 (318 aa).

The interval 1–33 (MPKRGKKGAVAEDGDELRTEPEAKKSKTAAKKN) is necessary for interaction with YBX1, binding to RNA, association together with NPM1 to rRNA, endoribonuclease activity on abasic RNA and localization in the nucleoli. The segment at 1-60 (MPKRGKKGAVAEDGDELRTEPEAKKSKTAAKKNDKEAAGEGPALYEDPPDQKTSPSGKPA) is disordered. N6-acetyllysine; by EP300 occurs at positions 6 and 7. The short motif at 8 to 13 (GAVAED) is the Nuclear localization signal (NLS) element. Residues 16–38 (ELRTEPEAKKSKTAAKKNDKEAA) show a composition bias toward basic and acidic residues. The segment at 23-33 (AKKSKTAAKKN) is necessary for interaction with NPM1 and for efficient rRNA binding. An N6-acetyllysine mark is found at lysine 27, lysine 31, lysine 32, and lysine 35. Serine 54 bears the Phosphoserine mark. A Nuclear export signal (NES) motif is present at residues 64–80 (ICSWNVDGLRAWIKKKG). The residue at position 65 (cysteine 65) is an S-nitrosocysteine; alternate. Cysteine 65 and cysteine 93 are joined by a disulfide. Aspartate 70 provides a ligand contact to Mg(2+). Cysteine 93 is modified (S-nitrosocysteine; alternate). A Mg(2+)-binding site is contributed by glutamate 96. Residue tyrosine 171 is part of the active site. Residue lysine 197 is modified to N6-acetyllysine. Mg(2+)-binding residues include aspartate 210 and asparagine 212. The Proton donor/acceptor role is filled by aspartate 210. Threonine 233 is subject to Phosphothreonine; by CDK5. A mitochondrial targeting sequence (MTS) region spans residues 289-318 (HSLLPALCDSKIRSKALGSDHCPITLYLAL). Position 308 (aspartate 308) interacts with Mg(2+). S-nitrosocysteine is present on cysteine 310.

Belongs to the DNA repair enzymes AP/ExoA family. Monomer. Homodimer; disulfide-linked. Component of the SET complex, composed of at least APEX1, SET, ANP32A, HMGB2, NME1 and TREX1. Associates with the dimer XRCC5/XRCC6 in a DNA-dependent manner. Interacts with SIRT1; the interaction is increased in the context of genotoxic stress. Interacts with HDAC1, HDAC2 and HDAC3; the interactions are not dependent on the APEX1 acetylation status. Interacts with XRCC1; the interaction is induced by SIRT1 and increased with the APEX1 acetylated form. Interacts with NPM1 (via N-terminal domain); the interaction is RNA-dependent and decreases in hydrogen peroxide-damaged cells. Interacts (via N-terminus) with YBX1 (via C-terminus); the interaction is increased in presence of APEX1 acetylated at Lys-6 and Lys-7. Interacts with HNRNPL; the interaction is DNA-dependent. Interacts (via N-terminus) with KPNA1 and KPNA2. Interacts with TXN; the interaction stimulates the FOS/JUN AP-1 complex DNA-binding activity in a redox-dependent manner. Interacts with GZMA, KRT8, MDM2, POLB, PRDX6, PRPF19, RPLP0, TOMM20 and WDR77. Binds to CDK5. It depends on Mg(2+) as a cofactor. Mn(2+) is required as a cofactor. Post-translationally, phosphorylated. Phosphorylation by kinase PKC or casein kinase CK2 results in enhanced redox activity that stimulates binding of the FOS/JUN AP-1 complex to its cognate binding site. AP-endodeoxyribonuclease activity is not affected by CK2-mediated phosphorylation. Phosphorylation of Thr-233 by CDK5 in response to MPP(+)/MPTP (1-methyl-4-phenylpyridinium) reduces AP-endodeoxyribonuclease activity resulting in accumulation of DNA damage and contributing to neuronal death. In terms of processing, acetylated on Lys-6 and Lys-7. Acetylation is increased by the transcriptional coactivator EP300 acetyltransferase, genotoxic agents like H(2)O(2) and methyl methanesulfonate (MMS). Acetylation increases its binding affinity to the negative calcium response element (nCaRE) DNA promoter. The acetylated form induces a stronger binding of YBX1 to the Y-box sequence in the MDR1 promoter than the unacetylated form. Deacetylated on lysines. Lys-6 and Lys-7 are deacetylated by SIRT1. Cleaved at Lys-31 by granzyme A to create the mitochondrial form; leading in reduction of binding to DNA, AP endodeoxyribonuclease activity, redox activation of transcription factors and to enhanced cell death. Cleaved by granzyme K; leading to intracellular ROS accumulation and enhanced cell death after oxidative stress. Post-translationally, cys-69 and Cys-93 are nitrosylated in response to nitric oxide (NO) and lead to the exposure of the nuclear export signal (NES). In terms of processing, ubiquitinated by MDM2; leading to translocation to the cytoplasm and proteasomal degradation.

The protein resides in the nucleus. The protein localises to the nucleolus. It localises to the nucleus speckle. Its subcellular location is the endoplasmic reticulum. It is found in the cytoplasm. The protein resides in the mitochondrion. It catalyses the reaction a deoxyribonucleotide-2'-deoxyribose-5'-monophosphate-DNA + H2O = a 5'-end 2'-deoxyribose-5'-monophosphate-DNA + a 3'-end 2'-deoxyribonucleotide-DNA + H(+). It carries out the reaction Exonucleolytic cleavage in the 3'- to 5'-direction to yield nucleoside 5'-phosphates.. The enzyme catalyses a 3'-end 2'-deoxyribonucleotide-3'-phosphoglycolate-DNA + H2O = 2-phosphoglycolate + a 3'-end 2'-deoxyribonucleotide-DNA + H(+). The catalysed reaction is a 3'-end 2'-deoxyribonucleotide-8-oxoguanine-DNA + H2O = 8-oxo-dGMP + a 3'-end 2'-deoxyribonucleotide-DNA + H(+). Its activity is regulated as follows. NPM1 stimulates endodeoxyribonuclease activity on double-stranded DNA with AP sites, but inhibits endoribonuclease activity on single-stranded RNA containing AP sites. Multifunctional protein that plays a central role in the cellular response to oxidative stress. The two major activities of APEX1 are DNA repair and redox regulation of transcriptional factors. Functions as an apurinic/apyrimidinic (AP) endodeoxyribonuclease in the base excision repair (BER) pathway of DNA lesions induced by oxidative and alkylating agents. Initiates repair of AP sites in DNA by catalyzing hydrolytic incision of the phosphodiester backbone immediately adjacent to the damage, generating a single-strand break with 5'-deoxyribose phosphate and 3'-hydroxyl ends. Also incises at AP sites in the DNA strand of DNA/RNA hybrids, single-stranded DNA regions of R-loop structures, and single-stranded RNA molecules. Operates at switch sites of immunoglobulin (Ig) constant regions where it mediates Ig isotype class switch recombination. Processes AP sites induced by successive action of AICDA and UNG. Generates staggered nicks in opposite DNA strands resulting in the formation of double-strand DNA breaks that are finally resolved via non-homologous end joining repair pathway. Has 3'-5' exodeoxyribonuclease activity on mismatched deoxyribonucleotides at the 3' termini of nicked or gapped DNA molecules during short-patch BER. Possesses DNA 3' phosphodiesterase activity capable of removing lesions (such as phosphoglycolate and 8-oxoguanine) blocking the 3' side of DNA strand breaks. Also acts as an endoribonuclease involved in the control of single-stranded RNA metabolism. Plays a role in regulating MYC mRNA turnover by preferentially cleaving in between UA and CA dinucleotides of the MYC coding region determinant (CRD). In association with NMD1, plays a role in the rRNA quality control process during cell cycle progression. Acts as a loading factor for POLB onto non-incised AP sites in DNA and stimulates the 5'-terminal deoxyribose 5'-phosphate (dRp) excision activity of POLB. Exerts reversible nuclear redox activity to regulate DNA binding affinity and transcriptional activity of transcriptional factors by controlling the redox status of their DNA-binding domain, such as the FOS/JUN AP-1 complex after exposure to IR. Involved in calcium-dependent down-regulation of parathyroid hormone (PTH) expression by binding to negative calcium response elements (nCaREs). Together with HNRNPL or the dimer XRCC5/XRCC6, associates with nCaRE, acting as an activator of transcriptional repression. May also play a role in the epigenetic regulation of gene expression by participating in DNA demethylation. Stimulates the YBX1-mediated MDR1 promoter activity, when acetylated at Lys-6 and Lys-7, leading to drug resistance. Plays a role in protection from granzyme-mediated cellular repair leading to cell death. Binds DNA and RNA. Associates, together with YBX1, on the MDR1 promoter. Together with NPM1, associates with rRNA. The chain is DNA repair nuclease/redox regulator APEX1 (APEX1) from Pan paniscus (Pygmy chimpanzee).